Consider the following 208-residue polypeptide: Uracil phosphoribosyltransferase (208 aa).

Residues R78, R103, and 130 to 138 contribute to the 5-phospho-alpha-D-ribose 1-diphosphate site; that span reads DPMLATGGS. Uracil contacts are provided by residues I193 and 198-200; that span reads GDA. A 5-phospho-alpha-D-ribose 1-diphosphate-binding site is contributed by D199.

This sequence belongs to the UPRTase family. Mg(2+) is required as a cofactor.

The catalysed reaction is UMP + diphosphate = 5-phospho-alpha-D-ribose 1-diphosphate + uracil. It functions in the pathway pyrimidine metabolism; UMP biosynthesis via salvage pathway; UMP from uracil: step 1/1. Allosterically activated by GTP. Catalyzes the conversion of uracil and 5-phospho-alpha-D-ribose 1-diphosphate (PRPP) to UMP and diphosphate. In Photobacterium profundum (strain SS9), this protein is Uracil phosphoribosyltransferase.